The primary structure comprises 2105 residues: Genome polyprotein (2105 aa).

The Alphavirus-like MT domain maps to 63-250 (APIGFKSHSH…EQNLANSKWP (188 aa)). Disordered regions lie at residues 529-548 (FLES…NSES) and 555-577 (GSAE…DGQG). Polar residues predominate over residues 530 to 543 (LESTGNIKSNPNAE). A compositionally biased stretch (basic and acidic residues) spans 555-566 (GSAENDQPHEVS). The region spanning 753 to 929 (FDLEFCKNMV…MIKTIKHKYL (177 aa)) is the (+)RNA virus helicase ATP-binding domain. 781 to 788 (GFAGSGKT) is an ATP binding site. Positions 930-1067 (FQGYRFGQWF…EGKSIPMERI (138 aa)) constitute a (+)RNA virus helicase C-terminal domain. One can recognise a RdRp catalytic domain in the interval 1358-1466 (GFSIESDYTA…LSSLKRRRGE (109 aa)). The V-region stretch occupies residues 1585-1868 (WLSSTSTASS…SRLELKDLEK (284 aa)). Residues 1960–1979 (TTTPKEGETDEGRKARAGSS) form a disordered region. The segment covering 1964–1973 (KEGETDEGRK) has biased composition (basic and acidic residues).

In terms of processing, the N-terminus of the coat protein is blocked.

The protein localises to the virion. The enzyme catalyses RNA(n) + a ribonucleoside 5'-triphosphate = RNA(n+1) + diphosphate. The catalysed reaction is ATP + H2O = ADP + phosphate + H(+). Functionally, replicates genomic RNA, and might as well transcribe a subgenomic RNA coding for coat protein. Coat protein: encapsidates the viral genome. Forms particles of very flexuous filaments, 619 nm long and 12 nm in width, with obvious cross-banding, helical symmetry and a pitch of c. 3.8 nm. Synthesis remains unclear: either by cleavage of the ORF1 polyprotein, or by translation of a subgenomic RNA. In Apple stem grooving virus (strain P-209) (ASGV), this protein is Genome polyprotein.